Reading from the N-terminus, the 386-residue chain is IgA receptor (386 aa).

A signal peptide spans 1 to 41 (MARKDTNKQYSLRKLKTGTASVAVAVAVLGAGFANQTEVKA). The igA-binding stretch occupies residues 42–152 (AEIKKPQADS…QKKHQQEQQQ (111 aa)). Basic and acidic residues-rich tracts occupy residues 79–88 (YADDKEKDPQ), 97–128 (QDLRKREGQYQDKIEELEKERKEKQERQEQLE), 134–166 (EADKHYQEQQKKHQQEQQQLEAEKQKLAKDKQI), 174–201 (LSRDLEASRAAKKELEAEHQKLKEEKQI), 209–221 (LSRDLEASREAKK), 233–243 (EHQKLKEDKQI), and 251–267 (LSRDLEASREAKKKVEA). Disordered stretches follow at residues 79–221 (YADD…EAKK) and 233–268 (EHQKLKEDKQISDASRQGLSRDLEASREAKKKVEAD). C repeat units lie at residues 158-192 (QKLAKDKQISDASRQGLSRDLEASRAAKKELEAEH), 193-227 (QKLKEEKQISDASRQGLSRDLEASREAKKKVEADL), and 235-269 (QKLKEDKQISDASRQGLSRDLEASREAKKKVEADL). D repeat units follow at residues 302 to 307 (ARLEAE), 308 to 313 (AKALKE), 316 to 321 (AKQAEE), and 323 to 328 (AKLKGN). Residues 323-360 (AKLKGNQTPNAKVAPQANRSRSAMTQQKRTLPSTGETA) are disordered. Residues 339-359 (ANRSRSAMTQQKRTLPSTGET) show a composition bias toward polar residues. The short motif at 353–357 (LPSTG) is the LPXTG sorting signal element. Threonine 356 is modified (pentaglycyl murein peptidoglycan amidated threonine). Positions 357–386 (GETANPFFTAAAATVMVSAGMLALKRKEEN) are cleaved as a propeptide — removed by sortase.

Belongs to the M protein family.

It is found in the secreted. The protein localises to the cell wall. Functionally, binds IgA of both subclasses, and also binds polyclonal IgG weakly. The chain is IgA receptor (arp4) from Streptococcus pyogenes.